We begin with the raw amino-acid sequence, 805 residues long: Transcription factor SFL1 (805 aa).

A compositionally biased stretch (low complexity) spans 1 to 24 (MSHLVSSSLGTTTTATPTSRSPHT). The tract at residues 1–110 (MSHLVSSSLG…NNNVSNNNST (110 aa)) is disordered. A compositionally biased stretch (polar residues) spans 25–69 (NHSTPYNQNSITSNRSSPVPKNSVNSRIIPQTMNPPIDMKSNNIL). The span at 71–85 (PEKDTDTSRGDHSES) shows a compositional bias: basic and acidic residues. The segment covering 86 to 110 (KASSISSASGTTTTNNNNVSNNNST) has biased composition (low complexity). The DNA-binding element occupies 117–226 (FIHKLYDMLH…LKNIKRRSSK (110 aa)). 5 disordered regions span residues 273–336 (MQSP…NQSP), 438–483 (QSNF…VAPQ), 513–675 (REDS…PAPQ), 691–746 (HQKS…SENH), and 759–805 (VSEL…RKLE). Over residues 295–310 (QQQQQQQQQQQQQQQQ) the composition is skewed to low complexity. Polar residues-rich tracts occupy residues 454 to 480 (HGNSVSSNYHLESTNVSRNPSTTNLNV) and 533 to 556 (PSRNSSRILIEESTPTHPPTNFNP). Residues 557 to 566 (QQSQSQSQVQ) show a composition bias toward low complexity. Polar residues-rich tracts occupy residues 581 to 597 (ESTYSPLSHSSNKSQIL), 604 to 614 (VNHSPLVQQQQ), and 622 to 635 (NDSSVAPPSQSSLP). The span at 637–659 (TRPLSRQQQQQQQTLHHPSTTSS) shows a compositional bias: low complexity. A compositionally biased stretch (polar residues) spans 716-738 (PISSTAPTTMITSTSKPTSTSGA).

This sequence belongs to the HSF family.

Its subcellular location is the nucleus. Transcription factor that plays a role of repressor of filamentous growth and flocculation. Antagonizes functions of SFL2 and FLO8. Plays a role in the hyphal repression induced by secreted factors like dodecanol by competitors such as Pseudomonas aeruginosa and Burkholderia cenocepacia. The polypeptide is Transcription factor SFL1 (SFL1) (Candida albicans (strain SC5314 / ATCC MYA-2876) (Yeast)).